We begin with the raw amino-acid sequence, 911 residues long: Probable 2-oxoadipate dehydrogenase complex component E1 homolog (911 aa).

It belongs to the alpha-ketoglutarate dehydrogenase family. Requires thiamine diphosphate as cofactor.

Its subcellular location is the mitochondrion. The enzyme catalyses N(6)-[(R)-lipoyl]-L-lysyl-[protein] + 2-oxoadipate + H(+) = N(6)-[(R)-S(8)-glutaryldihydrolipoyl]-L-lysyl-[protein] + CO2. In terms of biological role, 2-oxoadipate dehydrogenase (E1a) component of the 2-oxoadipate dehydrogenase complex (OADHC). Participates in the first step, rate limiting for the overall conversion of 2-oxoadipate (alpha-ketoadipate) to glutaryl-CoA and CO(2) catalyzed by the whole OADHC. Catalyzes the irreversible decarboxylation of 2-oxoadipate via the thiamine diphosphate (ThDP) cofactor and subsequent transfer of the decarboxylated acyl intermediate on an oxidized dihydrolipoyl group that is covalently amidated to the E2 enzyme (dihydrolipoyllysine-residue succinyltransferase or DLST). In Caenorhabditis elegans, this protein is Probable 2-oxoadipate dehydrogenase complex component E1 homolog.